The chain runs to 341 residues: Glycerol-3-phosphate dehydrogenase [NAD(P)+] (341 aa).

The NADPH site is built by S12, W13, R33, and K107. 3 residues coordinate sn-glycerol 3-phosphate: K107, G134, and T136. Residue A138 participates in NADPH binding. 5 residues coordinate sn-glycerol 3-phosphate: K189, D242, S252, R253, and N254. Residue K189 is the Proton acceptor of the active site. R253 is an NADPH binding site. Residues V277 and E279 each contribute to the NADPH site.

The protein belongs to the NAD-dependent glycerol-3-phosphate dehydrogenase family.

It is found in the cytoplasm. The enzyme catalyses sn-glycerol 3-phosphate + NAD(+) = dihydroxyacetone phosphate + NADH + H(+). It catalyses the reaction sn-glycerol 3-phosphate + NADP(+) = dihydroxyacetone phosphate + NADPH + H(+). It functions in the pathway membrane lipid metabolism; glycerophospholipid metabolism. Catalyzes the reduction of the glycolytic intermediate dihydroxyacetone phosphate (DHAP) to sn-glycerol 3-phosphate (G3P), the key precursor for phospholipid synthesis. In Halothermothrix orenii (strain H 168 / OCM 544 / DSM 9562), this protein is Glycerol-3-phosphate dehydrogenase [NAD(P)+].